The primary structure comprises 215 residues: UPF0502 protein CKO_01995 (215 aa).

The protein belongs to the UPF0502 family.

This Citrobacter koseri (strain ATCC BAA-895 / CDC 4225-83 / SGSC4696) protein is UPF0502 protein CKO_01995.